The chain runs to 232 residues: Lipoarabinomannan carrier protein LprG (232 aa).

An N-terminal signal peptide occupies residues 1–21 (MQTRLTAILAAFLTAVALLAG). Cys-22 carries N-palmitoyl cysteine lipidation. A lipid anchor (S-diacylglycerol cysteine) is attached at Cys-22.

This sequence belongs to the LppX/LprAFG lipoprotein family. In terms of processing, modified by Lgt on Cys-22 with an S-linked diacylglyceral, signal peptide is removed by LspA, Cys-22 is further modifed with a fatty acid on its amino group by Lnt yielding a triacylated protein.

It localises to the cell inner membrane. Its function is as follows. Helps membrane protein MHAS_02168/C731_2106 (P55) transport triacylglycerides (TAG) across the inner cell membrane into the periplasm and probably ultimately to the outer membrane. Binds TAG in its hydrophobic cavity and transfers it between lipid bilayers. TAG probably regulates lipid metabolism and growth regulation and plays a structural role in the outer membrane. Also binds mannosides, lipoarabinomannan and lipomannan and various glycolipids in the same cavity. The lprG-MHAS_02167/C731_2107 operon complements the vancomycin sensitivity of an M.smegmatis knockout of the same operon. The chain is Lipoarabinomannan carrier protein LprG from Mycolicibacterium hassiacum (strain DSM 44199 / CIP 105218 / JCM 12690 / 3849) (Mycobacterium hassiacum).